The primary structure comprises 203 residues: Endo-type membrane-bound lytic murein transglycosylase A (203 aa).

The first 15 residues, 1–15 (MKLRWFAFLIVLLAG), serve as a signal peptide directing secretion. A lipid anchor (N-palmitoyl cysteine) is attached at Cys16. Cys16 carries the S-diacylglycerol cysteine lipid modification.

Belongs to the transglycosylase Slt family.

The protein localises to the cell outer membrane. It catalyses the reaction Endolytic cleavage of the (1-&gt;4)-beta-glycosidic linkage between N-acetylmuramic acid (MurNAc) and N-acetylglucosamine (GlcNAc) residues in peptidoglycan with concomitant formation of a 1,6-anhydrobond in the MurNAc residue.. In terms of biological role, murein-degrading enzyme. May play a role in recycling of muropeptides during cell elongation and/or cell division. Preferentially cleaves at a distance of more than two disaccharide units from the ends of the glycan chain. In Shigella boydii serotype 4 (strain Sb227), this protein is Endo-type membrane-bound lytic murein transglycosylase A.